An 80-amino-acid polypeptide reads, in one-letter code: RNA-binding protein Hfq (80 aa).

Residues 9 to 69 (DVFLNQVRKE…ISTILPITPI (61 aa)) form the Sm domain.

Belongs to the Hfq family. In terms of assembly, homohexamer.

Functionally, RNA chaperone that binds small regulatory RNA (sRNAs) and mRNAs to facilitate mRNA translational regulation in response to envelope stress, environmental stress and changes in metabolite concentrations. Also binds with high specificity to tRNAs. The chain is RNA-binding protein Hfq from Alkaliphilus metalliredigens (strain QYMF).